Reading from the N-terminus, the 36-residue chain is Cytochrome b6-f complex subunit 5 (36 aa).

Residues 5–25 form a helical membrane-spanning segment; sequence LLSGIVLGLIPITILGLLMAA.

Belongs to the PetG family. In terms of assembly, the 4 large subunits of the cytochrome b6-f complex are cytochrome b6, subunit IV (17 kDa polypeptide, PetD), cytochrome f and the Rieske protein, while the 4 small subunits are PetG, PetL, PetM and PetN. The complex functions as a dimer.

It is found in the plastid. It localises to the chloroplast thylakoid membrane. Functionally, component of the cytochrome b6-f complex, which mediates electron transfer between photosystem II (PSII) and photosystem I (PSI), cyclic electron flow around PSI, and state transitions. PetG is required for either the stability or assembly of the cytochrome b6-f complex. In Cyanidioschyzon merolae (strain NIES-3377 / 10D) (Unicellular red alga), this protein is Cytochrome b6-f complex subunit 5.